The primary structure comprises 1547 residues: Tubby-related protein 4 (1547 aa).

WD repeat units follow at residues 80-119 (GHNSEVVLVRWNEPYQKLATCDADGGIFVWIQYEGRWSVE), 123-162 (DRGAQVSDFTWSHDGTQALISYRDGFVLVGSVSGQRHWSS), and 165-204 (NLESQITCGIWTPDDQQVLFGTADGQVIVMDCHGRMLAHV). An SOCS box domain is found at 364–414 (ALYVVRVEHRVSSLQLLCQQAIASTLREDKDVNKLTLPPRLCSYLSTAFIP). The tract at residues 530-580 (SPKISRSSKSPKLPRISIEARKSPKLPRAAQEISRSPRLPMRKPSMGSPSL) is disordered. A compositionally biased stretch (low complexity) spans 533–546 (ISRSSKSPKLPRIS). A Phosphoserine modification is found at serine 577. 2 positions are modified to asymmetric dimethylarginine: arginine 949 and arginine 954. Phosphoserine occurs at positions 1347 and 1378. Residues 1374–1414 (SLISSPRLGREKKKVKSQKDQLKSKKLNKTNEFQDSSESEP) are disordered. The segment at 1436–1547 (SKRSLRTASE…ALANVTQRLK (112 aa)) is TUB.

Belongs to the TUB family.

The protein resides in the cytoplasm. It participates in protein modification; protein ubiquitination. May be a substrate-recognition component of a SCF-like ECS (Elongin-Cullin-SOCS-box protein) E3 ubiquitin ligase complex which mediates the ubiquitination and subsequent proteasomal degradation of target proteins. The sequence is that of Tubby-related protein 4 (Tulp4) from Mus musculus (Mouse).